The primary structure comprises 305 residues: tRNA uridine(34) hydroxylase (305 aa).

Positions Cys-126–Ser-220 constitute a Rhodanese domain. The active-site Cysteine persulfide intermediate is Cys-180.

Belongs to the TrhO family.

The enzyme catalyses uridine(34) in tRNA + AH2 + O2 = 5-hydroxyuridine(34) in tRNA + A + H2O. In terms of biological role, catalyzes oxygen-dependent 5-hydroxyuridine (ho5U) modification at position 34 in tRNAs. The polypeptide is tRNA uridine(34) hydroxylase (Nostoc punctiforme (strain ATCC 29133 / PCC 73102)).